The following is a 56-amino-acid chain: MAKKNKNVLVRLVSTAGTGVFWVKKRNPKTQTEKLSFRKYDKVVRKHVIFKEEKIK.

Belongs to the bacterial ribosomal protein bL33 family.

This chain is Large ribosomal subunit protein bL33, found in Rickettsia typhi (strain ATCC VR-144 / Wilmington).